Reading from the N-terminus, the 217-residue chain is Protein-L-isoaspartate O-methyltransferase (217 aa).

Residue S62 is part of the active site.

Belongs to the methyltransferase superfamily. L-isoaspartyl/D-aspartyl protein methyltransferase family.

The protein localises to the cytoplasm. It catalyses the reaction [protein]-L-isoaspartate + S-adenosyl-L-methionine = [protein]-L-isoaspartate alpha-methyl ester + S-adenosyl-L-homocysteine. Catalyzes the methyl esterification of L-isoaspartyl residues in peptides and proteins that result from spontaneous decomposition of normal L-aspartyl and L-asparaginyl residues. It plays a role in the repair and/or degradation of damaged proteins. The protein is Protein-L-isoaspartate O-methyltransferase of Trichlorobacter lovleyi (strain ATCC BAA-1151 / DSM 17278 / SZ) (Geobacter lovleyi).